Reading from the N-terminus, the 225-residue chain is Enolase-phosphatase E1 (225 aa).

It belongs to the HAD-like hydrolase superfamily. MasA/MtnC family. As to quaternary structure, monomer. It depends on Mg(2+) as a cofactor.

It carries out the reaction 5-methylsulfanyl-2,3-dioxopentyl phosphate + H2O = 1,2-dihydroxy-5-(methylsulfanyl)pent-1-en-3-one + phosphate. The protein operates within amino-acid biosynthesis; L-methionine biosynthesis via salvage pathway; L-methionine from S-methyl-5-thio-alpha-D-ribose 1-phosphate: step 3/6. It participates in amino-acid biosynthesis; L-methionine biosynthesis via salvage pathway; L-methionine from S-methyl-5-thio-alpha-D-ribose 1-phosphate: step 4/6. Functionally, bifunctional enzyme that catalyzes the enolization of 2,3-diketo-5-methylthiopentyl-1-phosphate (DK-MTP-1-P) into the intermediate 2-hydroxy-3-keto-5-methylthiopentenyl-1-phosphate (HK-MTPenyl-1-P), which is then dephosphorylated to form the acireductone 1,2-dihydroxy-3-keto-5-methylthiopentene (DHK-MTPene). The chain is Enolase-phosphatase E1 from Shewanella denitrificans (strain OS217 / ATCC BAA-1090 / DSM 15013).